Here is a 113-residue protein sequence, read N- to C-terminus: Translation initiation factor IF-1, chloroplastic (113 aa).

The S1-like domain maps to 8–83 (REKKNPREAK…SKGRIIYRLP (76 aa)). Positions 86–113 (DSKRIEDSKDSEDLKDSEDLKDTKDSKD) are disordered.

The protein belongs to the IF-1 family. Component of the 30S ribosomal translation pre-initiation complex which assembles on the 30S ribosome in the order IF-2 and IF-3, IF-1 and N-formylmethionyl-tRNA(fMet); mRNA recruitment can occur at any time during PIC assembly.

The protein localises to the plastid. Its subcellular location is the chloroplast. One of the essential components for the initiation of protein synthesis. Stabilizes the binding of IF-2 and IF-3 on the 30S subunit to which N-formylmethionyl-tRNA(fMet) subsequently binds. Helps modulate mRNA selection, yielding the 30S pre-initiation complex (PIC). Upon addition of the 50S ribosomal subunit IF-1, IF-2 and IF-3 are released leaving the mature 70S translation initiation complex. This is Translation initiation factor IF-1, chloroplastic from Hordeum vulgare (Barley).